A 136-amino-acid polypeptide reads, in one-letter code: Nucleoside diphosphate kinase (136 aa).

The ATP site is built by lysine 10, phenylalanine 58, arginine 86, threonine 92, arginine 104, and asparagine 114. Histidine 117 functions as the Pros-phosphohistidine intermediate in the catalytic mechanism.

This sequence belongs to the NDK family. Homotetramer. Mg(2+) is required as a cofactor.

The protein resides in the cytoplasm. It carries out the reaction a 2'-deoxyribonucleoside 5'-diphosphate + ATP = a 2'-deoxyribonucleoside 5'-triphosphate + ADP. It catalyses the reaction a ribonucleoside 5'-diphosphate + ATP = a ribonucleoside 5'-triphosphate + ADP. In terms of biological role, major role in the synthesis of nucleoside triphosphates other than ATP. The ATP gamma phosphate is transferred to the NDP beta phosphate via a ping-pong mechanism, using a phosphorylated active-site intermediate. In Mycobacterium leprae (strain TN), this protein is Nucleoside diphosphate kinase.